Here is a 171-residue protein sequence, read N- to C-terminus: Small ribosomal subunit protein uS4 (171 aa).

The S4 RNA-binding domain occupies 101–165 (RRLQTVVYRK…SSLSDELHPE (65 aa)). A disordered region spans residues 148-171 (SSVGFDEHSSLSDELHPERAEAQE). The segment covering 152–171 (FDEHSSLSDELHPERAEAQE) has biased composition (basic and acidic residues).

Belongs to the universal ribosomal protein uS4 family. As to quaternary structure, part of the 30S ribosomal subunit. Contacts protein S5. The interaction surface between S4 and S5 is involved in control of translational fidelity.

One of the primary rRNA binding proteins, it binds directly to 16S rRNA where it nucleates assembly of the body of the 30S subunit. In terms of biological role, with S5 and S12 plays an important role in translational accuracy. In Haloarcula marismortui (strain ATCC 43049 / DSM 3752 / JCM 8966 / VKM B-1809) (Halobacterium marismortui), this protein is Small ribosomal subunit protein uS4.